We begin with the raw amino-acid sequence, 143 residues long: Transcriptional regulator MraZ (143 aa).

SpoVT-AbrB domains are found at residues 5 to 47 (EYKH…SLKE) and 76 to 119 (ACEC…SEEN).

It belongs to the MraZ family. As to quaternary structure, forms oligomers.

The protein resides in the cytoplasm. It localises to the nucleoid. This Caldicellulosiruptor saccharolyticus (strain ATCC 43494 / DSM 8903 / Tp8T 6331) protein is Transcriptional regulator MraZ.